A 715-amino-acid polypeptide reads, in one-letter code: Palmitoyltransferase ZDHHC5 (715 aa).

Topologically, residues 1-13 (MPAESGKRFKPSK) are cytoplasmic. The chain crosses the membrane as a helical span at residues 14–34 (YVPVSAAAIFLVGATTLFFAF). The Extracellular portion of the chain corresponds to 35–52 (TCPGLSLDVSPAVPIYNA). Residues 53–73 (IMFLFVLANFSMATFMDPGIF) traverse the membrane as a helical segment. Residues 74-148 (PRAEEDEDKE…NCIGRRNYRY (75 aa)) lie on the Cytoplasmic side of the membrane. Position 91 is a phosphotyrosine (Y91). The DHHC domain maps to 104 to 154 (KWCATCRFYRPPRCSHCSVCDNCVEEFDHHCPWVNNCIGRRNYRYFFLFLL). C134 functions as the S-palmitoyl cysteine intermediate in the catalytic mechanism. The helical transmembrane segment at 149-169 (FFLFLLSLTAHIMGVFGFGLL) threads the bilayer. Residues 170-191 (YVLCHIEELSGVRTAVTMAVMC) are Extracellular-facing. A helical membrane pass occupies residues 192–212 (VAGLFFIPVAGLTGFHVVLVA). Over 213–715 (RGRTTNEQVT…VGGTTYEISV (503 aa)) the chain is Cytoplasmic. S247 is subject to Phosphoserine. The segment at 289–715 (GELRRTKSKG…VGGTTYEISV (427 aa)) is disordered. T294 carries the post-translational modification Phosphothreonine. Residues S296 and S299 each carry the phosphoserine modification. T303 carries the post-translational modification Phosphothreonine. S345 bears the Phosphoserine mark. Residues T348 and T350 each carry the phosphothreonine modification. Low complexity predominate over residues 359–373 (SSSSTSAAMPHSSSA). 4 positions are modified to phosphoserine: S380, S398, S406, and S409. T411 carries the post-translational modification Phosphothreonine. 4 positions are modified to phosphoserine: S415, S425, S429, and S432. The segment covering 422–432 (SSGSRSSSLKS) has biased composition (low complexity). T436 bears the Phosphothreonine mark. The span at 442-478 (QLQSIRSEGTTSTSYKSLANQTRNGSLSYDSLLTPSD) shows a compositional bias: polar residues. Residues S529 and S554 each carry the phosphoserine modification. A compositionally biased stretch (low complexity) spans 581-597 (PRTSSSSDDSKRSPLSK). R617 is subject to Omega-N-methylarginine. S621 carries the phosphoserine modification. T659 carries the post-translational modification Phosphothreonine. Polar residues predominate over residues 666–677 (LKTTYSKSNGQP). A phosphoserine mark is found at S684 and S694. At R697 the chain carries Omega-N-methylarginine.

Belongs to the DHHC palmitoyltransferase family. ERF2/ZDHHC9 subfamily. Post-translationally, autopalmitoylated. Palmitoylation of the C-terminal tail regulates stimulation-dependent plasma membrane motility. Phosphorylation regulates association with endocytic proteins and its subcellular localization. Phosphorylation by LYN during fatty acid uptake leads to inactivation of the activity.

The protein resides in the cell membrane. The catalysed reaction is L-cysteinyl-[protein] + hexadecanoyl-CoA = S-hexadecanoyl-L-cysteinyl-[protein] + CoA. Functionally, palmitoyltransferase that catalyzes the addition of palmitate onto various protein substrates such as CTNND2, CD36, GSDMD, NLRP3, NOD1, NOD2, STAT3 and S1PR1 thus plays a role in various biological processes including cell adhesion, inflammation, fatty acid uptake, bacterial sensing or cardiac functions. Plays an important role in the regulation of synapse efficacy by mediating palmitoylation of delta-catenin/CTNND2, thereby increasing synaptic delivery and surface stabilization of alpha-amino-3-hydroxy-5-methyl-4-isoxazole propionic acid receptors (AMPARs). Under basal conditions, remains at the synaptic membrane through FYN-mediated phosphorylation that prevents association with endocytic proteins. Neuronal activity enhances the internalization and trafficking of DHHC5 from spines to dendritic shafts where it palmitoylates delta-catenin/CTNND2. Regulates cell adhesion at the plasma membrane by palmitoylating GOLGA7B and DSG2. Plays a role in innate immune response by mediating the palmitoylation of NOD1 and NOD2 and their proper recruitment to the bacterial entry site and phagosomes. Also participates in fatty acid uptake by palmitoylating CD36 and thereby targeting it to the plasma membrane. Upon binding of fatty acids to CD36, gets phosphorylated by LYN leading to inactivation and subsequent CD36 caveolar endocytosis. Controls oligodendrocyte development by catalyzing STAT3 palmitoylation. Acts as a regulator of inflammatory response by mediating palmitoylation of NLRP3 and GSDMD. Palmitoylates NLRP3 to promote inflammasome assembly and activation. Activates pyroptosis by catalyzing palmitoylation of gasdermin-D (GSDMD), thereby promoting membrane translocation and pore formation of GSDMD. The polypeptide is Palmitoyltransferase ZDHHC5 (Zdhhc5) (Rattus norvegicus (Rat)).